The chain runs to 545 residues: CTP synthase (545 aa).

The segment at 1 to 266 (MTKNYIFITG…DDYICNYFKL (266 aa)) is amidoligase domain. Ser-14 contacts CTP. Ser-14 contacts UTP. ATP is bound by residues 15–20 (SLGKGI) and Asp-72. The Mg(2+) site is built by Asp-72 and Glu-140. CTP contacts are provided by residues 147 to 149 (DIE), 187 to 192 (KTKPTQ), and Lys-223. UTP is bound by residues 187–192 (KTKPTQ) and Lys-223. 239–241 (KDV) provides a ligand contact to ATP. In terms of domain architecture, Glutamine amidotransferase type-1 spans 291–543 (VIGIIGKYIK…IKSAGKHKKN (253 aa)). Residue Gly-352 coordinates L-glutamine. The Nucleophile; for glutamine hydrolysis role is filled by Cys-379. Residues 380-383 (LGMQ), Glu-403, and Arg-471 contribute to the L-glutamine site. Active-site residues include His-516 and Glu-518.

Belongs to the CTP synthase family. Homotetramer.

The catalysed reaction is UTP + L-glutamine + ATP + H2O = CTP + L-glutamate + ADP + phosphate + 2 H(+). It catalyses the reaction L-glutamine + H2O = L-glutamate + NH4(+). The enzyme catalyses UTP + NH4(+) + ATP = CTP + ADP + phosphate + 2 H(+). It participates in pyrimidine metabolism; CTP biosynthesis via de novo pathway; CTP from UDP: step 2/2. With respect to regulation, allosterically activated by GTP, when glutamine is the substrate; GTP has no effect on the reaction when ammonia is the substrate. The allosteric effector GTP functions by stabilizing the protein conformation that binds the tetrahedral intermediate(s) formed during glutamine hydrolysis. Inhibited by the product CTP, via allosteric rather than competitive inhibition. Its function is as follows. Catalyzes the ATP-dependent amination of UTP to CTP with either L-glutamine or ammonia as the source of nitrogen. Regulates intracellular CTP levels through interactions with the four ribonucleotide triphosphates. In Buchnera aphidicola subsp. Acyrthosiphon pisum (strain 5A), this protein is CTP synthase.